The primary structure comprises 85 residues: Exodeoxyribonuclease 7 small subunit (85 aa).

It belongs to the XseB family. As to quaternary structure, heterooligomer composed of large and small subunits.

It localises to the cytoplasm. It carries out the reaction Exonucleolytic cleavage in either 5'- to 3'- or 3'- to 5'-direction to yield nucleoside 5'-phosphates.. Functionally, bidirectionally degrades single-stranded DNA into large acid-insoluble oligonucleotides, which are then degraded further into small acid-soluble oligonucleotides. This is Exodeoxyribonuclease 7 small subunit from Mycobacterium bovis (strain ATCC BAA-935 / AF2122/97).